A 209-amino-acid polypeptide reads, in one-letter code: Imidazole glycerol phosphate synthase subunit HisH (209 aa).

A Glutamine amidotransferase type-1 domain is found at 1–205 (MIAIIDYGMG…QGVVEAWKSS (205 aa)). The active-site Nucleophile is Cys-79. Catalysis depends on residues His-180 and Glu-182.

In terms of assembly, heterodimer of HisH and HisF.

It localises to the cytoplasm. It catalyses the reaction 5-[(5-phospho-1-deoxy-D-ribulos-1-ylimino)methylamino]-1-(5-phospho-beta-D-ribosyl)imidazole-4-carboxamide + L-glutamine = D-erythro-1-(imidazol-4-yl)glycerol 3-phosphate + 5-amino-1-(5-phospho-beta-D-ribosyl)imidazole-4-carboxamide + L-glutamate + H(+). The enzyme catalyses L-glutamine + H2O = L-glutamate + NH4(+). It functions in the pathway amino-acid biosynthesis; L-histidine biosynthesis; L-histidine from 5-phospho-alpha-D-ribose 1-diphosphate: step 5/9. In terms of biological role, IGPS catalyzes the conversion of PRFAR and glutamine to IGP, AICAR and glutamate. The HisH subunit catalyzes the hydrolysis of glutamine to glutamate and ammonia as part of the synthesis of IGP and AICAR. The resulting ammonia molecule is channeled to the active site of HisF. The protein is Imidazole glycerol phosphate synthase subunit HisH of Bacillus cereus (strain ATCC 14579 / DSM 31 / CCUG 7414 / JCM 2152 / NBRC 15305 / NCIMB 9373 / NCTC 2599 / NRRL B-3711).